A 275-amino-acid polypeptide reads, in one-letter code: UPF0328 protein ECU05_0050 (275 aa).

The protein belongs to the UPF0328 family.

This Encephalitozoon cuniculi (strain GB-M1) (Microsporidian parasite) protein is UPF0328 protein ECU05_0050.